Reading from the N-terminus, the 237-residue chain is Terpene cyclase spyD (237 aa).

A run of 7 helical transmembrane segments spans residues I17–V37, A47–Y67, Y71–G91, H109–A129, I138–L158, S167–L187, and W206–G226.

Belongs to the paxB family.

The protein localises to the membrane. It catalyses the reaction (S)-(2E,6E,10E)-epoxygeranylgeranyl-triacetate lactone = sartorypyrone F. It carries out the reaction (S)-(2E,6E,10E)-epoxygeranylgeranyl-triacetate lactone = sartorypyrone D. It participates in secondary metabolite biosynthesis; terpenoid biosynthesis. Functionally, terpene cyclase; part of the gene cluster that mediates the biosynthesis of meroterpenoids called sartorypyrones. Within the pathway, spyD catalyzes the cyclization of epoxygeranylgeranyl-triacetate lactone. SpyD exhibits promiscuous activity, resulting in the formation of bicyclic sartorypyrone F and monocyclic sartorypyrone D. The biosynthesis of sartorypyrones begins with the production of triacetic acid lactone (TAL) by the NR-PKS spyA using one molecule of acetyl-CoA and two molecules of malonyl-CoA. The prenyltransferase spyF then conjugates geranylgeranyl pyrophosphate (GGPP) to TAL to form geranylgeranyl-triacetate lactone, for which the pathway-specific geranylgeranyl pyrophosphate synthase (GGPS) spyE is required to provide GGPP. Subsequently, geranylgeranyl-triacetate lactone is epoxidized at the terminal olein by the FAD-dependent monooxygenase spyC, followed by cyclization of the terpenoid component catalyzed by the terpene cyclase spyD to produce both the bicyclic sartorypyrone F and the monocyclic sartorypyrone D. Finally, the last step of the biosynthesis involves the acetylation of the meroterpenoids sartorypyrones D and F by the acetyltransferase SpyB to produce sartorypyrones A and G, respectively. The polypeptide is Terpene cyclase spyD (Aspergillus fumigatus (strain ATCC MYA-4609 / CBS 101355 / FGSC A1100 / Af293) (Neosartorya fumigata)).